A 152-amino-acid polypeptide reads, in one-letter code: Large ribosomal subunit protein uL13 (152 aa).

The segment at 130 to 152 is disordered; that stretch reads HPHEAQSPEVLDLASKNPKNTRS.

Belongs to the universal ribosomal protein uL13 family. As to quaternary structure, part of the 50S ribosomal subunit.

This protein is one of the early assembly proteins of the 50S ribosomal subunit, although it is not seen to bind rRNA by itself. It is important during the early stages of 50S assembly. This Dinoroseobacter shibae (strain DSM 16493 / NCIMB 14021 / DFL 12) protein is Large ribosomal subunit protein uL13.